The sequence spans 141 residues: uncharacterized protein (141 aa).

The chain crosses the membrane as a helical span at residues 114–134 (ILFTCYIQSFSLLISNFFIAI).

Its subcellular location is the membrane. This is an uncharacterized protein from Schizosaccharomyces pombe (strain 972 / ATCC 24843) (Fission yeast).